The chain runs to 56 residues: MYLFRRTSKAVKRKRRTHFKLSVPGMVECPSCGEAKLAHRVCKACGTYKGKEVISK.

This sequence belongs to the bacterial ribosomal protein bL32 family.

In Bacillus cereus (strain ATCC 14579 / DSM 31 / CCUG 7414 / JCM 2152 / NBRC 15305 / NCIMB 9373 / NCTC 2599 / NRRL B-3711), this protein is Large ribosomal subunit protein bL32.